Reading from the N-terminus, the 308-residue chain is Dihydroorotate dehydrogenase A (fumarate) (308 aa).

Residues S24 and 48–49 each bind FMN; that span reads KS. Residues K48, 72–76, and N132 each bind substrate; that span reads NANGL. Residue N132 participates in FMN binding. Catalysis depends on C135, which acts as the Nucleophile. FMN-binding residues include K171 and I197. A substrate-binding site is contributed by 198-199; sequence NT. Residues G223 and 249-250 contribute to the FMN site; that span reads GG.

The protein belongs to the dihydroorotate dehydrogenase family. Type 1 subfamily. As to quaternary structure, homodimer. It depends on FMN as a cofactor.

Its subcellular location is the cytoplasm. The enzyme catalyses (S)-dihydroorotate + fumarate = orotate + succinate. The protein operates within pyrimidine metabolism; UMP biosynthesis via de novo pathway. Functionally, catalyzes the conversion of dihydroorotate to orotate with fumarate as the electron acceptor. This chain is Dihydroorotate dehydrogenase A (fumarate) (pyrD), found in Limosilactobacillus reuteri (strain DSM 20016) (Lactobacillus reuteri).